The chain runs to 212 residues: Prolactin (212 aa).

A signal peptide spans 1–24 (MAHRETNGSKLFITVLCMVAACSA). Cystine bridges form between Cys-70/Cys-185 and Cys-202/Cys-212.

This sequence belongs to the somatotropin/prolactin family.

The protein resides in the secreted. This chain is Prolactin (prl), found in Sparus aurata (Gilthead sea bream).